We begin with the raw amino-acid sequence, 1793 residues long: uncharacterized protein (1793 aa).

Disordered stretches follow at residues 156–189, 204–362, and 407–505; these read ARQA…ASSQ, QRES…PPKV, and ASFG…SGAA. Residues 166 to 175 are compositionally biased toward polar residues; sequence SSAQDSQELK. A compositionally biased stretch (basic and acidic residues) spans 227–237; the sequence is SPKEKAQDEPS. Residues 238–247 are compositionally biased toward polar residues; that stretch reads SKTPSPQNNP. Residues 248–258 show a composition bias toward low complexity; the sequence is ASSQLSRSQHS. A compositionally biased stretch (basic and acidic residues) spans 277 to 288; that stretch reads KAEEDGLSKMED. Over residues 289–307 the composition is skewed to low complexity; the sequence is STTSTGALATSSSSLGFES. Residues 317-342 are compositionally biased toward gly residues; that stretch reads AVGGEGEKISGGGGGGKGGGGGGAGD. Low complexity predominate over residues 434-450; the sequence is STTPSTNTTRTPSPTSS. A compositionally biased stretch (polar residues) spans 463–476; that stretch reads DTSSTEVGSGPSDS. Residues 485 to 505 are compositionally biased toward low complexity; that stretch reads PGTAPLTEPLPETPEAASGAA. Position 733 is a phosphothreonine (threonine 733). Disordered regions lie at residues 757–809, 829–917, 1090–1147, 1161–1187, 1229–1249, 1408–1465, and 1482–1567; these read RSES…SKFA, MERG…FTDG, RDIR…GSGS, QRED…NSSS, QKTP…ATKP, TGGV…KSNS, and GELL…PLPF. Composition is skewed to basic and acidic residues over residues 829–839 and 846–872; these read MERGEVMDTSH and KETE…HSEA. The span at 1113 to 1123 shows a compositional bias: low complexity; that stretch reads KGSGDSSDKGS. The span at 1161-1174 shows a compositional bias: basic and acidic residues; that stretch reads QREDSMDREPRESM. At serine 1187 the chain carries Phosphoserine. A compositionally biased stretch (basic and acidic residues) spans 1231-1246; the sequence is TPEKLKEEEVKEEGKA. Over residues 1513–1528 the composition is skewed to low complexity; the sequence is SQVPSSSKGSQVSGTS. Residues 1546–1555 show a composition bias toward pro residues; that stretch reads PPGPQSPEHP. The residue at position 1774 (arginine 1774) is an Omega-N-methylarginine.

In terms of tissue distribution, expressed in muscle, heart, kidney and liver but barely detectable in lung, pancreas and brain. In liver veins, expressed in hepatic vein, extrahepatic portal vein and intrahepatic portal vein.

This is an uncharacterized protein from Homo sapiens (Human).